The chain runs to 208 residues: Large ribosomal subunit protein uL3 (208 aa).

The interval 116–146 is disordered; that stretch reads GFQGAIKRHGQSRGPMAHGSRYHRRPGSMGP.

Belongs to the universal ribosomal protein uL3 family. Part of the 50S ribosomal subunit. Forms a cluster with proteins L14 and L19.

One of the primary rRNA binding proteins, it binds directly near the 3'-end of the 23S rRNA, where it nucleates assembly of the 50S subunit. The polypeptide is Large ribosomal subunit protein uL3 (Streptococcus mutans serotype c (strain ATCC 700610 / UA159)).